The sequence spans 166 residues: Anaerobic nitrite reductase NSHB1 (166 aa).

The 151-residue stretch at 13–163 (SFSEEQEALV…LVAAIKQEMK (151 aa)) folds into the Globin domain. Positions 46–50 (EVAPS) match the Homodimerization motif. 6 residues coordinate heme b: S56, K70, H74, R104, T108, and H109. The Homodimerization signature appears at 116–128 (DAHFEVVKFALLD).

The protein belongs to the plant globin family. In terms of assembly, homodimer. Heme b is required as a cofactor. In terms of tissue distribution, expressed in coleoptiles, embryos, leaves, seminal roots and roots.

It localises to the cytoplasm. Its subcellular location is the nucleus. The catalysed reaction is Fe(III)-heme b-[protein] + nitric oxide + H2O = Fe(II)-heme b-[protein] + nitrite + 2 H(+). Slowly reduced by ascorbic acid (AA); this reaction may become a source of nitric oxide (NO) during hypoxia. Functionally, phytoglobin that reduces nitrite to nitric oxide under anoxic conditions (e.g. during flooding or in waterlogged soil). May not function as an oxygen storage or transport protein. Has an unusually high affinity for O(2) through a hexacoordinate heme iron because of a very low dissociation constant. This is Anaerobic nitrite reductase NSHB1 from Oryza sativa subsp. japonica (Rice).